The following is a 147-amino-acid chain: UPF0306 protein YhbP (147 aa).

Belongs to the UPF0306 family.

In Escherichia coli O17:K52:H18 (strain UMN026 / ExPEC), this protein is UPF0306 protein YhbP.